The sequence spans 430 residues: Adenylosuccinate synthetase (430 aa).

GTP contacts are provided by residues glycine 12–lysine 18 and glycine 40–threonine 42. Aspartate 13 (proton acceptor) is an active-site residue. The Mg(2+) site is built by aspartate 13 and glycine 40. IMP-binding positions include aspartate 13–lysine 16, asparagine 38–histidine 41, threonine 128, arginine 142, glutamine 223, threonine 238, and arginine 302. Catalysis depends on histidine 41, which acts as the Proton donor. Threonine 298 to arginine 304 is a substrate binding site. GTP contacts are provided by residues arginine 304, leucine 330 to aspartate 332, and serine 412 to glycine 414.

This sequence belongs to the adenylosuccinate synthetase family. In terms of assembly, homodimer. Mg(2+) serves as cofactor.

The protein resides in the cytoplasm. The enzyme catalyses IMP + L-aspartate + GTP = N(6)-(1,2-dicarboxyethyl)-AMP + GDP + phosphate + 2 H(+). It functions in the pathway purine metabolism; AMP biosynthesis via de novo pathway; AMP from IMP: step 1/2. In terms of biological role, plays an important role in the de novo pathway of purine nucleotide biosynthesis. Catalyzes the first committed step in the biosynthesis of AMP from IMP. The protein is Adenylosuccinate synthetase of Listeria monocytogenes serotype 4a (strain HCC23).